Here is a 636-residue protein sequence, read N- to C-terminus: Carbon monoxide dehydrogenase 1 (636 aa).

[4Fe-4S] cluster-binding residues include cysteine 38, cysteine 46, cysteine 47, cysteine 50, cysteine 55, and cysteine 69. [Ni-4Fe-5S] cluster is bound by residues histidine 262, cysteine 297, cysteine 335, cysteine 448, cysteine 478, and cysteine 528.

Belongs to the Ni-containing carbon monoxide dehydrogenase family. Homodimer. [4Fe-4S] cluster serves as cofactor. The cofactor is [Ni-4Fe-5S] cluster.

The protein resides in the cytoplasm. Its subcellular location is the cell membrane. It carries out the reaction CO + 2 oxidized [2Fe-2S]-[ferredoxin] + H2O = 2 reduced [2Fe-2S]-[ferredoxin] + CO2 + 2 H(+). With respect to regulation, inactivated by O(2). In terms of biological role, CODH oxidizes carbon monoxide coupled, via CooF, to the reduction of a hydrogen cation by a hydrogenase (possibly CooH). The protein is Carbon monoxide dehydrogenase 1 (cooS1) of Carboxydothermus hydrogenoformans (strain ATCC BAA-161 / DSM 6008 / Z-2901).